Here is a 101-residue protein sequence, read N- to C-terminus: Small ribosomal subunit protein bS18c (101 aa).

This sequence belongs to the bacterial ribosomal protein bS18 family. As to quaternary structure, part of the 30S ribosomal subunit.

The protein localises to the plastid. It is found in the chloroplast. The chain is Small ribosomal subunit protein bS18c from Solanum bulbocastanum (Wild potato).